The primary structure comprises 1077 residues: MPKRTDIQSILILGAGPIVIGQACEFDYSGAQACKALREEGYRVILVNSNPATIMTDPDMADATYIEPIQWEVVRKIIEKERPDAVLPTMGGQTALNCALALEKHGVLAEFGVEMIGATADAIDKAEDRSRFDKAMKSIGLECPRADTAKTMEEAYKVLDMVGFPCIIRPSFTMGGTGGGIAYNKEEFEEICRRGLDLSPTNELLIDESLIGWKEYEMEVVRDKADNCIIVCSIENFDPMGIHTGDSITVAPAQTLTDKEYQLMRNASLAVLREIGVETGGSNVQFGINPKDGRMVIIEMNPRVSRSSALASKATGFPIAKIAAKLAVGFTLDELQNDITGGATPASFEPTIDYVVTKIPRFNFEKFAGANDRLTTQMKSVGEVMAIGRNQQESLHKALRGLEVGATGFDEMVDLDSPDALTKIRHELKEAGAERIWYIADAFRAGMSVDGVFNLTNIDRWFLVQIEEIVKLEEQVKAGGFAGLTQDVLRQMKRKGFSDARLSKLLGVAESEIRRLRDQFDIHPVYKRVDTCAAEFSSDTAYMYSSYDDECEANPTDKEKIMVLGGGPNRIGQGIEFDYCCVHASLALREDGYETIMVNCNPETVSTDYDTSDRLYFEPVTLEDVLAIARVEKPKGVIVQYGGQTPLKLARALEAAGVPIIGTSPDAIDRAEDRERFQQAVDRLGLLQPENATVTTMEQAVEKSREIGFPLVVRPSYVLGGRAMEIVYDEQDLRRYFNEAVSVSNESPVLLDRFLDDAIEVDIDAICDGERVVIGGIMEHIEQAGVHSGDSACSLPAYTLSQEIQDKMREQVEKLAFELGVRGLMNTQFAVKDNEVYLIEVNPRAARTVPFVSKATGAPLAKIAARVMAGQSLESQGFTKEIIPPYYSVKEVVLPFNKFPGVDPLLGPEMRSTGEVMGVGATFAEAYAKAELGCGNVYPEGGRALLSVREGDKQRVVDLASKLLKLGYKLDATHGTAVILGEAGINPRLVNKVHEGRPHILDRIKNNEYTYIVNTAAGRQAIEDSKVLRRGALAEKVNYTTTLNAAFATCMSHTADAKASVTSVQELHAQVQASLKA.

Residues 1 to 403 (MPKRTDIQSI…SLHKALRGLE (403 aa)) are carboxyphosphate synthetic domain. ATP-binding residues include R129, R169, G175, G176, E208, L210, E215, G241, I242, H243, Q285, and E299. Residues 133–328 (DKAMKSIGLE…IAKIAAKLAV (196 aa)) enclose the ATP-grasp 1 domain. Mg(2+) contacts are provided by Q285, E299, and N301. Mn(2+) contacts are provided by Q285, E299, and N301. The tract at residues 404–553 (VGATGFDEMV…YSSYDDECEA (150 aa)) is oligomerization domain. A carbamoyl phosphate synthetic domain region spans residues 554 to 935 (NPTDKEKIMV…AYAKAELGCG (382 aa)). The 192-residue stretch at 678–869 (QQAVDRLGLL…LAKIAARVMA (192 aa)) folds into the ATP-grasp 2 domain. Residues R714, R753, L755, E760, G785, V786, H787, S788, Q828, and E840 each coordinate ATP. 3 residues coordinate Mg(2+): Q828, E840, and N842. Mn(2+) is bound by residues Q828, E840, and N842. An MGS-like domain is found at 936-1077 (NVYPEGGRAL…HAQVQASLKA (142 aa)). The interval 936–1077 (NVYPEGGRAL…HAQVQASLKA (142 aa)) is allosteric domain.

Belongs to the CarB family. As to quaternary structure, composed of two chains; the small (or glutamine) chain promotes the hydrolysis of glutamine to ammonia, which is used by the large (or ammonia) chain to synthesize carbamoyl phosphate. Tetramer of heterodimers (alpha,beta)4. It depends on Mg(2+) as a cofactor. Requires Mn(2+) as cofactor.

The catalysed reaction is hydrogencarbonate + L-glutamine + 2 ATP + H2O = carbamoyl phosphate + L-glutamate + 2 ADP + phosphate + 2 H(+). It catalyses the reaction hydrogencarbonate + NH4(+) + 2 ATP = carbamoyl phosphate + 2 ADP + phosphate + 2 H(+). It functions in the pathway amino-acid biosynthesis; L-arginine biosynthesis; carbamoyl phosphate from bicarbonate: step 1/1. The protein operates within pyrimidine metabolism; UMP biosynthesis via de novo pathway; (S)-dihydroorotate from bicarbonate: step 1/3. In terms of biological role, large subunit of the glutamine-dependent carbamoyl phosphate synthetase (CPSase). CPSase catalyzes the formation of carbamoyl phosphate from the ammonia moiety of glutamine, carbonate, and phosphate donated by ATP, constituting the first step of 2 biosynthetic pathways, one leading to arginine and/or urea and the other to pyrimidine nucleotides. The large subunit (synthetase) binds the substrates ammonia (free or transferred from glutamine from the small subunit), hydrogencarbonate and ATP and carries out an ATP-coupled ligase reaction, activating hydrogencarbonate by forming carboxy phosphate which reacts with ammonia to form carbamoyl phosphate. The polypeptide is Carbamoyl phosphate synthase large chain (Vibrio vulnificus (strain CMCP6)).